The primary structure comprises 601 residues: Proteasome-associated ATPase (601 aa).

Gly residues predominate over residues 1–15 (MSGPRSGSGSGGSTG). A disordered region spans residues 1–31 (MSGPRSGSGSGGSTGRPGDAESRRSAYEKEA). Basic and acidic residues predominate over residues 18–31 (GDAESRRSAYEKEA). Residues 18–106 (GDAESRRSAY…LKEEVDRLAQ (89 aa)) adopt a coiled-coil conformation. Residue 289-294 (GCGKTL) coordinates ATP. The interval 600–601 (YL) is docks into pockets in the proteasome alpha-ring.

Belongs to the AAA ATPase family. Homohexamer. Assembles into a hexameric ring structure that caps the 20S proteasome core. Strongly interacts with the prokaryotic ubiquitin-like protein Pup through a hydrophobic interface; the interacting region of ARC lies in its N-terminal coiled-coil domain. There is one Pup binding site per ARC hexamer ring. Upon ATP-binding, the C-terminus of ARC interacts with the alpha-rings of the proteasome core, possibly by binding to the intersubunit pockets.

It functions in the pathway protein degradation; proteasomal Pup-dependent pathway. Functionally, ATPase which is responsible for recognizing, binding, unfolding and translocation of pupylated proteins into the bacterial 20S proteasome core particle. May be essential for opening the gate of the 20S proteasome via an interaction with its C-terminus, thereby allowing substrate entry and access to the site of proteolysis. Thus, the C-termini of the proteasomal ATPase may function like a 'key in a lock' to induce gate opening and therefore regulate proteolysis. The polypeptide is Proteasome-associated ATPase (Frankia alni (strain DSM 45986 / CECT 9034 / ACN14a)).